A 310-amino-acid polypeptide reads, in one-letter code: Phosphoribosylaminoimidazole-succinocarboxamide synthase (310 aa).

The protein belongs to the SAICAR synthetase family.

The catalysed reaction is 5-amino-1-(5-phospho-D-ribosyl)imidazole-4-carboxylate + L-aspartate + ATP = (2S)-2-[5-amino-1-(5-phospho-beta-D-ribosyl)imidazole-4-carboxamido]succinate + ADP + phosphate + 2 H(+). The protein operates within purine metabolism; IMP biosynthesis via de novo pathway; 5-amino-1-(5-phospho-D-ribosyl)imidazole-4-carboxamide from 5-amino-1-(5-phospho-D-ribosyl)imidazole-4-carboxylate: step 1/2. This is Phosphoribosylaminoimidazole-succinocarboxamide synthase from Xanthomonas campestris pv. campestris (strain B100).